The primary structure comprises 1904 residues: Fatty acid synthase beta subunit hexB (1904 aa).

The interval 24–395 (LSVAFGGQGP…TEGTGVRVIQ (372 aa)) is acetyltransferase (AT) domain. Residues 447-691 (TQLLNAPPVM…LIVQTEGVGD (245 aa)) are enoyl reductase (ER) domain. The segment at 1001 to 1491 (GPAADCWTHH…RPNDRLKIQL (491 aa)) is dehydratase (DH) domain. In terms of domain architecture, MaoC-like spans 1399 to 1512 (PGWNEGSTVL…MKVQAFNDET (114 aa)). A malonyl/palmitoyl transferase (MT/PT) domain region spans residues 1530–1893 (YVFCGQGSQE…IEHVQSVTGS (364 aa)).

This sequence belongs to the fungal fatty acid synthetase subunit beta family. In terms of assembly, [Alpha(6)beta(6)] hexamers of two multifunctional subunits (alpha and beta).

It carries out the reaction acetyl-CoA + n malonyl-CoA + 2n NADPH + 4n H(+) = a long-chain-acyl-CoA + n CoA + n CO2 + 2n NADP(+).. The enzyme catalyses holo-[ACP] + acetyl-CoA = acetyl-[ACP] + CoA. The catalysed reaction is holo-[ACP] + malonyl-CoA = malonyl-[ACP] + CoA. It catalyses the reaction a (3R)-hydroxyacyl-[ACP] = a (2E)-enoyl-[ACP] + H2O. It carries out the reaction a 2,3-saturated acyl-[ACP] + NAD(+) = a (2E)-enoyl-[ACP] + NADH + H(+). The enzyme catalyses (9Z)-octadecenoyl-[ACP] + H2O = (9Z)-octadecenoate + holo-[ACP] + H(+). It functions in the pathway mycotoxin biosynthesis. Its function is as follows. Fatty acid synthase beta subunit; part of the fragmented gene cluster that mediates the biosynthesis of dothistromin (DOTH), a polyketide toxin very similar in structure to the aflatoxin precursor, versicolorin B. The first step of the pathway is the conversion of acetate to norsolorinic acid (NOR) and requires the fatty acid synthase subunits hexA and hexB, as well as the polyketide synthase pksA. PksA combines a hexanoyl starter unit and 7 malonyl-CoA extender units to synthesize the precursor NOR. The hexanoyl starter unit is provided to the acyl-carrier protein (ACP) domain by the fungal fatty acid synthase hexA/hexB. The second step is the conversion of NOR to averantin (AVN) and requires the norsolorinic acid ketoreductase nor1, which catalyzes the dehydration of norsolorinic acid to form (1'S)-averantin. The cytochrome P450 monooxygenase avnA then catalyzes the hydroxylation of AVN to 5'hydroxyaverantin (HAVN). The next step is performed by adhA that transforms HAVN to averufin (AVF). Averufin might then be converted to hydroxyversicolorone by cypX and avfA. Hydroxyversicolorone is further converted versiconal hemiacetal acetate (VHA) by moxY. VHA is then the substrate for the versiconal hemiacetal acetate esterase est1 to yield versiconal (VAL). Versicolorin B synthase vbsA then converts VAL to versicolorin B (VERB) by closing the bisfuran ring. Then, the activity of the versicolorin B desaturase verB leads to versicolorin A (VERA). DotB, a predicted chloroperoxidase, may perform epoxidation of the A-ring of VERA. Alternatively, a cytochrome P450, such as cypX or avnA could catalyze this step. It is also possible that another, uncharacterized, cytochrome P450 enzyme is responsible for this step. Opening of the epoxide could potentially be achieved by the epoxide hydrolase epoA. However, epoA seems not to be required for DOTH biosynthesis, but other epoxide hydrolases may have the ability to complement this hydrolysis. Alternatively, opening of the epoxide ring could be achieved non-enzymatically. The next step is the deoxygenation of ring A to yield the 5,8-dihydroxyanthraquinone which is most likely catalyzed by the NADPH dehydrogenase encoded by ver1. The last stages of DOTH biosynthesis are proposed to involve hydroxylation of the bisfuran. OrdB and norB might have oxidative roles here. An alternative possibility is that cytochrome P450 monoogenases such as avnA and cypX might perform these steps in addition to previously proposed steps. The sequence is that of Fatty acid synthase beta subunit hexB from Dothistroma septosporum (strain NZE10 / CBS 128990) (Red band needle blight fungus).